The primary structure comprises 293 residues: Elongation factor Ts (293 aa).

The tract at residues 80-83 (TDFV) is involved in Mg(2+) ion dislocation from EF-Tu.

Belongs to the EF-Ts family.

It is found in the cytoplasm. Its function is as follows. Associates with the EF-Tu.GDP complex and induces the exchange of GDP to GTP. It remains bound to the aminoacyl-tRNA.EF-Tu.GTP complex up to the GTP hydrolysis stage on the ribosome. The chain is Elongation factor Ts from Staphylococcus aureus (strain Newman).